Consider the following 467-residue polypeptide: Putative pentatricopeptide repeat-containing protein At1g10330 (467 aa).

PPR repeat units follow at residues 50-84, 85-119, 120-150, 151-181, 182-216, 220-256, 257-287, 288-322, 323-358, and 359-389; these read TKCVYNTLIRSYLTTGEYKTSLALFTHMLASHVQP, NNLTFPSLIKAACSSFSVSYGVALHGQALKRGFLW, DPFVQTSFVRFYGEVGDLESSRKMFDDILNP, CVVACNSLLDACGRNGEMDYAFEYFQRMPVT, DVVSWTTVINGFSKKGLHAKALMVFGEMIQNERAV, NEATFVSVLSSCANFDQGGIRLGKQIHGYVMSKEIIL, TTTLGTALLDMYGKAGDLEMALTIFDQIRDK, KVCAWNAIISALASNGRPKQALEMFEMMKSSYVHP, NGITLLAILTACARSKLVDLGIQLFSSICSEYKIIP, and TSEHYGCVVDLIGRAGLLVDAANFIQSLPFE. The segment at 394 to 467 is type E motif; degenerate; the sequence is VLGALLGACK…RKIPAYSVLT (74 aa).

This sequence belongs to the PPR family. PCMP-E subfamily.

This chain is Putative pentatricopeptide repeat-containing protein At1g10330 (PCMP-E71), found in Arabidopsis thaliana (Mouse-ear cress).